The sequence spans 499 residues: Proline dehydrogenase 1, mitochondrial (499 aa).

The transit peptide at 1–72 directs the protein to the mitochondrion; the sequence is MATRLLRTNF…LDLSDQARLF (72 aa).

The protein belongs to the proline oxidase family. It depends on FAD as a cofactor. Ubiquitous. Highest expression in pollen grains, in the stigma and in developing embryos.

Its subcellular location is the mitochondrion. It carries out the reaction L-proline + a quinone = (S)-1-pyrroline-5-carboxylate + a quinol + H(+). The protein operates within amino-acid degradation; L-proline degradation into L-glutamate; L-glutamate from L-proline: step 1/2. Converts proline to delta-1-pyrroline-5-carboxylate. This chain is Proline dehydrogenase 1, mitochondrial (POX1), found in Arabidopsis thaliana (Mouse-ear cress).